The following is a 273-amino-acid chain: Large ribosomal subunit protein uL2cz/uL2cy (273 aa).

Disordered stretches follow at residues 1-22 (MAIH…DSQV) and 223-254 (MNPV…PALG).

This sequence belongs to the universal ribosomal protein uL2 family. In terms of assembly, part of the 50S ribosomal subunit.

It localises to the plastid. It is found in the chloroplast. This is Large ribosomal subunit protein uL2cz/uL2cy (rpl2-A) from Drimys granadensis.